Here is a 1043-residue protein sequence, read N- to C-terminus: Non-canonical nonribosomal peptide synthetase cpsA (1043 aa).

The segment at 41 to 386 is adenylation (A) domain; it reads RRAQENPSAP…IGGDGVSPGY (346 aa). One can recognise a Carrier domain in the interval 549-626; sequence QDASTTISRL…QMARYVDEGG (78 aa). Residue S586 is modified to O-(pantetheine 4'-phosphoryl)serine. The short-chain dehydrogenase/reductase (R) domain stretch occupies residues 671–914; sequence MTGATGFVGA…FVPVDYLVDA (244 aa). Positions 672 to 915 constitute a Thioester reductase (TE) domain; that stretch reads TGATGFVGAF…VPVDYLVDAI (244 aa).

It belongs to the NRP synthetase family. It depends on pantetheine 4'-phosphate as a cofactor.

The catalysed reaction is L-valine + ATP + NADPH + H(+) = L-valinal + AMP + diphosphate + NADP(+). The enzyme catalyses L-tryptophan + ATP + NADPH + H(+) = L-tryptophanal + AMP + diphosphate + NADP(+). It participates in alkaloid biosynthesis. Non-canonical nonribosomal peptide synthetase; part of the gene cluster that mediates the biosynthesis of campesine G, a dimeric indole piperazine alkaloid that shows good insecticidal activity Galleria mellonella. CpsA catalyzes the first steps of the pathway by producing L-tryptophanal and L-valinal from their respective amino-acids. These products condensate spontaneously to form trypyl-valyl pyrazine also known as didehydrocampesine A. The NmrA-like family domain-containing oxidoreductase cpsB is the next enzyme in cps pathway and reduces the unstable didehydrocampesine A to campesine A. The methyltransferase cpsF and the acetyltransferase cpsE both recognize N13 of piperazine ring to carry out methylation and acetylation of campesine A to produce campesine C and B, respectively. The cytochrome P450 monooxygenase cpsD then acts as a dimerase that catalyzes oxidative heterocoupling between campesine B and C to produce heterodimers with unexpected 6/5/6/6/6/6/5/6 eight-ring scaffold called campesine D. Finally,the cytochrome P450 monooxygenase cpsC is a regioselective dehydrogenase that catalyzes dehydrogenation reaction towards C2-N1 to produce campesine G. The protein is Non-canonical nonribosomal peptide synthetase cpsA of Aspergillus campestris (strain IBT 28561).